The following is a 420-amino-acid chain: Acyl-coenzyme A amino acid N-acyltransferase 2 (420 aa).

Residues serine 235, aspartate 329, and histidine 363 each act as charge relay system in the active site. Residues 418 to 420 (SKL) carry the Microbody targeting signal motif.

Belongs to the C/M/P thioester hydrolase family.

The protein localises to the peroxisome. Functionally, acyltransferase which efficiently conjugates very long-chain and long-chain fatty acids to taurine. Shows no conjugation activity in the presence of glycine. The sequence is that of Acyl-coenzyme A amino acid N-acyltransferase 2 from Mus musculus (Mouse).